The chain runs to 185 residues: Ribosome-recycling factor (185 aa).

This sequence belongs to the RRF family.

The protein localises to the cytoplasm. Its function is as follows. Responsible for the release of ribosomes from messenger RNA at the termination of protein biosynthesis. May increase the efficiency of translation by recycling ribosomes from one round of translation to another. The chain is Ribosome-recycling factor from Alkaliphilus oremlandii (strain OhILAs) (Clostridium oremlandii (strain OhILAs)).